A 21-amino-acid chain; its full sequence is Cupiennin-6b (21 aa).

A Serine amide modification is found at serine 21.

In terms of tissue distribution, expressed by the venom gland.

The protein localises to the secreted. This chain is Cupiennin-6b, found in Cupiennius salei (American wandering spider).